A 350-amino-acid polypeptide reads, in one-letter code: Sulfate/thiosulfate import ATP-binding protein cysA (350 aa).

Positions 3 to 237 (IEVRNLSKRF…PATPFVYGFL (235 aa)) constitute an ABC transporter domain. 35 to 42 (GPSGCGKT) contributes to the ATP binding site.

The protein belongs to the ABC transporter superfamily. Sulfate/tungstate importer (TC 3.A.1.6) family.

Its subcellular location is the mitochondrion. It catalyses the reaction sulfate(out) + ATP + H2O = sulfate(in) + ADP + phosphate + H(+). The enzyme catalyses thiosulfate(out) + ATP + H2O = thiosulfate(in) + ADP + phosphate + H(+). Part of the ABC transporter complex involved in sulfate/thiosulfate import. Responsible for energy coupling to the transport system. This is Sulfate/thiosulfate import ATP-binding protein cysA (CYSA) from Cucumis sativus (Cucumber).